The following is a 670-amino-acid chain: DNA mismatch repair protein MutL (670 aa).

Residues 363 to 451 (SFDRGRPLSR…RAAGGPASTH (89 aa)) are disordered. Residues 379–389 (ERWRERHRPDA) show a composition bias toward basic and acidic residues.

Belongs to the DNA mismatch repair MutL/HexB family.

Functionally, this protein is involved in the repair of mismatches in DNA. It is required for dam-dependent methyl-directed DNA mismatch repair. May act as a 'molecular matchmaker', a protein that promotes the formation of a stable complex between two or more DNA-binding proteins in an ATP-dependent manner without itself being part of a final effector complex. The polypeptide is DNA mismatch repair protein MutL (Syntrophobacter fumaroxidans (strain DSM 10017 / MPOB)).